The primary structure comprises 533 residues: Probable ribonuclease ZC3H12D (533 aa).

Positions L92–S246 constitute an RNase NYN domain. The C3H1-type zinc-finger motif lies at K251–R282. The segment at H262 to G368 is necessary for interaction with ZC3H12A. The segment at L302–P335 is disordered.

Belongs to the ZC3H12 family. Interacts with ZC3H12A. Requires Mg(2+) as cofactor. In terms of tissue distribution, expressed at low levels in bone marrow derived macrophages.

It localises to the cytoplasm. Its subcellular location is the P-body. In terms of biological role, may regulate cell growth likely by suppressing RB1 phosphorylation. May function as RNase and regulate the levels of target RNA species (Potential). In association with ZC3H12A enhances the degradation of interleukin IL-6 mRNA level in activated macrophages. Serve as a tumor suppressor in certain leukemia cells. Overexpression inhibits the G1 to S phase progression through suppression of RB1 phosphorylation. This Mus musculus (Mouse) protein is Probable ribonuclease ZC3H12D.